We begin with the raw amino-acid sequence, 429 residues long: tRNA(Ile2) 2-agmatinylcytidine synthetase TiaS (429 aa).

Residues 403 to 429 (KPPERPLHPSKSLEPPSTPIHSDTISL) form a disordered region.

The protein belongs to the TiaS family.

It localises to the cytoplasm. The enzyme catalyses cytidine(34) in tRNA(Ile2) + agmatine + ATP + H2O = 2-agmatinylcytidine(34) in tRNA(Ile2) + AMP + 2 phosphate + 2 H(+). Its function is as follows. ATP-dependent agmatine transferase that catalyzes the formation of 2-agmatinylcytidine (agm2C) at the wobble position (C34) of tRNA(Ile2), converting the codon specificity from AUG to AUA. The protein is tRNA(Ile2) 2-agmatinylcytidine synthetase TiaS of Hyperthermus butylicus (strain DSM 5456 / JCM 9403 / PLM1-5).